The chain runs to 208 residues: Small ribosomal subunit protein uS4 (208 aa).

The 64-residue stretch at 98 to 161 (RRLDNVVYRL…RKSKRFKEVF (64 aa)) folds into the S4 RNA-binding domain.

This sequence belongs to the universal ribosomal protein uS4 family. As to quaternary structure, part of the 30S ribosomal subunit. Contacts protein S5. The interaction surface between S4 and S5 is involved in control of translational fidelity.

In terms of biological role, one of the primary rRNA binding proteins, it binds directly to 16S rRNA where it nucleates assembly of the body of the 30S subunit. Its function is as follows. With S5 and S12 plays an important role in translational accuracy. The polypeptide is Small ribosomal subunit protein uS4 (Halothermothrix orenii (strain H 168 / OCM 544 / DSM 9562)).